Consider the following 409-residue polypeptide: Glucose-1-phosphate adenylyltransferase (409 aa).

Alpha-D-glucose 1-phosphate-binding positions include Gly-168, Glu-183–Lys-184, and Ser-201.

It belongs to the bacterial/plant glucose-1-phosphate adenylyltransferase family. In terms of assembly, homotetramer.

It catalyses the reaction alpha-D-glucose 1-phosphate + ATP + H(+) = ADP-alpha-D-glucose + diphosphate. It functions in the pathway glycan biosynthesis; glycogen biosynthesis. In terms of biological role, involved in the biosynthesis of ADP-glucose, a building block required for the elongation reactions to produce glycogen. Catalyzes the reaction between ATP and alpha-D-glucose 1-phosphate (G1P) to produce pyrophosphate and ADP-Glc. This is Glucose-1-phosphate adenylyltransferase from Corynebacterium efficiens (strain DSM 44549 / YS-314 / AJ 12310 / JCM 11189 / NBRC 100395).